The sequence spans 274 residues: Bis(5'-nucleosyl)-tetraphosphatase, symmetrical (274 aa).

The protein belongs to the Ap4A hydrolase family.

It catalyses the reaction P(1),P(4)-bis(5'-adenosyl) tetraphosphate + H2O = 2 ADP + 2 H(+). Functionally, hydrolyzes diadenosine 5',5'''-P1,P4-tetraphosphate to yield ADP. The polypeptide is Bis(5'-nucleosyl)-tetraphosphatase, symmetrical (Shewanella sp. (strain MR-7)).